The sequence spans 440 residues: Protein root UVB sensitive 3 (440 aa).

The next 3 helical transmembrane spans lie at 109–129 (IGAT…GILF), 154–174 (IGML…VVVC), and 232–252 (FTSG…VFHM).

This sequence belongs to the RUS1 family.

It localises to the membrane. The chain is Protein root UVB sensitive 3 from Arabidopsis thaliana (Mouse-ear cress).